The chain runs to 237 residues: MKVQRGDTGKAVVVLSGGMDSTVCATLAVREYGAENIGALHVSYGQRTAAREKQAFAAVAERLGIQTRLAVETPFFRAIGGSALTDANIAVPDAGELIGHEIPVTYVPFRNAHLLAMAVSWAEVLGASKIYIGAVAQDSSGYPDCRPEFYEAYNLAVRRGTKAGDIEVVTPLIALRKHEIVSLGLELGAPFDLTWSCYSREDCACGVCDSCVLRLRAFEGAGAVDPVPYAPRLAGHD.

15–25 (LSGGMDSTVCA) contributes to the ATP binding site. Zn(2+)-binding residues include C197, C205, C208, and C211.

The protein belongs to the QueC family. The cofactor is Zn(2+).

The enzyme catalyses 7-carboxy-7-deazaguanine + NH4(+) + ATP = 7-cyano-7-deazaguanine + ADP + phosphate + H2O + H(+). The protein operates within purine metabolism; 7-cyano-7-deazaguanine biosynthesis. In terms of biological role, catalyzes the ATP-dependent conversion of 7-carboxy-7-deazaguanine (CDG) to 7-cyano-7-deazaguanine (preQ(0)). The protein is 7-cyano-7-deazaguanine synthase of Koribacter versatilis (strain Ellin345).